The following is a 215-amino-acid chain: Small ribosomal subunit protein uS3 (215 aa).

One can recognise a KH type-2 domain in the interval 39–107; it reads VRQYLQKKLA…PVHINIEEIR (69 aa).

This sequence belongs to the universal ribosomal protein uS3 family. Part of the 30S ribosomal subunit. Forms a tight complex with proteins S10 and S14.

Its function is as follows. Binds the lower part of the 30S subunit head. Binds mRNA in the 70S ribosome, positioning it for translation. The sequence is that of Small ribosomal subunit protein uS3 from Nitrosomonas europaea (strain ATCC 19718 / CIP 103999 / KCTC 2705 / NBRC 14298).